The following is an 88-amino-acid chain: MKKTALLAALCSVVSLSSCCRIVDCCFEDPCAPIQCSPCESKKKDVDGGCNSCNGYVPACKPCGGDTHQDAKHGPQARGIPVDGKCRQ.

Residues 1-18 form the signal peptide; the sequence is MKKTALLAALCSVVSLSS. Cys19 carries N-palmitoyl cysteine lipidation. Cys19 carries the S-diacylglycerol cysteine lipid modification.

Part of a disulfide cross-linked outer membrane complex (COMC) composed of the major outer membrane porin (MOMP), the small cysteine-rich protein (OmcA) and the large cysteine-rich periplasmic protein (OmcB).

Its subcellular location is the cell outer membrane. In elementary bodies (EBs, the infectious stage, which is able to survive outside the host cell) provides the structural integrity of the outer envelope through disulfide cross-links with the large cysteine-rich periplasmic protein and the major outer membrane porin. It has been described in publications as the Sarkosyl-insoluble COMC (Chlamydia outer membrane complex), and serves as the functional equivalent of peptidoglycan. In Chlamydia trachomatis serovar B (strain Jali20/OT), this protein is Small cysteine-rich outer membrane protein OmcA (omcA).